Reading from the N-terminus, the 393-residue chain is Acetyl-CoA acetyltransferase (393 aa).

Catalysis depends on C88, which acts as the Acyl-thioester intermediate. Catalysis depends on proton acceptor residues H349 and C379.

Belongs to the thiolase-like superfamily. Thiolase family. As to quaternary structure, homotetramer.

It is found in the cytoplasm. It carries out the reaction 2 acetyl-CoA = acetoacetyl-CoA + CoA. It participates in biopolymer metabolism; poly-(R)-3-hydroxybutanoate biosynthesis. With respect to regulation, the condensation reaction is inhibited by free CoA. The cleavage reaction is characterized by substrate inhibition by acetoacetyl-CoA, which is partially relieved by free CoA. Catalyzes the condensation of two acetyl-coA units to form acetoacetyl-CoA. Is involved in the biosynthesis of polyhydroxybutyrate (PHB), which is accumulated as an intracellular energy reserve material when cells grow under conditions of nutrient limitation. Also catalyzes the reverse reaction, i.e. the cleavage of acetoacetyl-CoA, and is therefore also involved in the reutilization of PHB. The chain is Acetyl-CoA acetyltransferase from Cupriavidus necator (strain ATCC 17699 / DSM 428 / KCTC 22496 / NCIMB 10442 / H16 / Stanier 337) (Ralstonia eutropha).